Reading from the N-terminus, the 443-residue chain is uncharacterized protein (443 aa).

Positions 1–21 are disordered; the sequence is MQSVTPPPTQQGKPDPTNSDM. A compositionally biased stretch (polar residues) spans 10–20; sequence QQGKPDPTNSD.

This is an uncharacterized protein from Caenorhabditis elegans.